The chain runs to 203 residues: Ras-related protein Rab5A (203 aa).

Residue 18 to 26 (GDVGTGKSS) coordinates GTP. The Effector region signature appears at 40–48 (QESTIGAAF). GTP-binding positions include 66 to 70 (DTAGQ), 124 to 127 (NKAD), and 154 to 155 (SA). 2 S-geranylgeranyl cysteine lipidation sites follow: C201 and C202.

It belongs to the small GTPase superfamily. Rab family. Interacts with VPS9A. Interacts with NSF and RBP-L. As to expression, highly expressed in roots. Expressed at low levels in shoots, flowers and grains.

It is found in the prevacuolar compartment membrane. The protein resides in the golgi apparatus membrane. The protein localises to the cell membrane. Its subcellular location is the protein storage vacuole membrane. Plays an important role in intracellular trafficking of seed storage proteins to the protein storage vacuoles (PSVs). Participates in the transport of the proglutelins from the Golgi apparatus to the PSVs in endosperm. Functions cooperatively with VPS9A to regulate post-Golgi dense vesicle-mediated transport of storage proteins to the type II protein bodies (PBII) protein storage vacuoles in developing endosperm. Involved in the maintenance of the general structural organization of the endomembrane system in developing endosperm. Binds GTP in vitro. Forms a quaternary complex with the two glutelin zipcode RNA-binding proteins RBP-L and RBP-P, and the membrane trafficking factor NSF. This quaternay complex carries glutelin mRNAs for active transport on endosomes to the cortical endoplasmic reticulum membrane, and enables endosome-mediated glutelin mRNA transport in endosperm cells. In Oryza sativa subsp. japonica (Rice), this protein is Ras-related protein Rab5A.